Reading from the N-terminus, the 111-residue chain is Ribosome-binding factor A (111 aa).

The protein belongs to the RbfA family. As to quaternary structure, monomer. Binds 30S ribosomal subunits, but not 50S ribosomal subunits or 70S ribosomes.

It is found in the cytoplasm. Functionally, one of several proteins that assist in the late maturation steps of the functional core of the 30S ribosomal subunit. Associates with free 30S ribosomal subunits (but not with 30S subunits that are part of 70S ribosomes or polysomes). Required for efficient processing of 16S rRNA. May interact with the 5'-terminal helix region of 16S rRNA. The protein is Ribosome-binding factor A of Helicobacter pylori (strain Shi470).